The following is a 357-amino-acid chain: DNA replication and repair protein RecF (357 aa).

An ATP-binding site is contributed by 30–37 (GANGSGKT).

It belongs to the RecF family.

It is found in the cytoplasm. The RecF protein is involved in DNA metabolism; it is required for DNA replication and normal SOS inducibility. RecF binds preferentially to single-stranded, linear DNA. It also seems to bind ATP. The protein is DNA replication and repair protein RecF of Citrobacter koseri (strain ATCC BAA-895 / CDC 4225-83 / SGSC4696).